Here is a 691-residue protein sequence, read N- to C-terminus: Dipeptidyl-peptidase 5 (691 aa).

Positions 1–20 (MKRTILSLLAAVSLAIPVYA) are cleaved as a signal peptide. Residues serine 549, aspartate 634, and histidine 666 each act as charge relay system in the active site.

It belongs to the peptidase S9C family. As to quaternary structure, homodimer.

It is found in the periplasm. In terms of biological role, catalyzes the removal of dipeptides from the N-terminus of oligopeptides. Prefers Ala and hydrophobic residues at the P1 position, and has no preference for P2 residues. Shows the highest dipeptidyl peptidase activity toward the synthetic substrate Lys-Ala-methylcoumaryl-7-amide (Lys-Ala-MCA). Is likely involved in amino acid metabolism and bacterial growth/survival of asaccharolytic P.endodontalis, that utilizes amino acids from extracellular proteinaceous nutrients as energy and carbon sources. This is Dipeptidyl-peptidase 5 from Porphyromonas endodontalis (strain ATCC 35406 / DSM 24491 / JCM 8526 / CCUG 16442 / BCRC 14492 / NCTC 13058 / HG 370) (Bacteroides endodontalis).